The following is a 407-amino-acid chain: Peptidase T (407 aa).

H82 serves as a coordination point for Zn(2+). Residue D84 is part of the active site. Residue D143 coordinates Zn(2+). The active-site Proton acceptor is E177. Residues E178, D200, and H382 each coordinate Zn(2+).

It belongs to the peptidase M20B family. It depends on Zn(2+) as a cofactor.

The protein localises to the cytoplasm. The catalysed reaction is Release of the N-terminal residue from a tripeptide.. In terms of biological role, cleaves the N-terminal amino acid of tripeptides. In Streptococcus pyogenes serotype M1, this protein is Peptidase T.